A 486-amino-acid chain; its full sequence is Protein DETOXIFICATION 53 (486 aa).

12 helical membrane passes run 15–35 (CPIV…MWFL), 45–65 (GGAL…KGLS), 94–114 (LLIV…PIFL), 130–150 (MLFF…RTFL), 159–179 (LTIS…VFVV), 187–207 (GVAI…LVYT), 240–260 (AISV…CGLL), 267–287 (VAAM…PFAI), 312–332 (VIGL…VTAL), 346–366 (ILGL…GNSP), 386–406 (VNLC…TFGF), and 413–433 (LWFG…YTLI). Positions 448-474 (TSAAADKSHSEDETVHAEVQDDDDVSS) are disordered. The span at 453 to 466 (DKSHSEDETVHAEV) shows a compositional bias: basic and acidic residues.

The protein belongs to the multi antimicrobial extrusion (MATE) (TC 2.A.66.1) family.

It is found in the membrane. This Arabidopsis thaliana (Mouse-ear cress) protein is Protein DETOXIFICATION 53.